Reading from the N-terminus, the 612-residue chain is UvrABC system protein C (612 aa).

The GIY-YIG domain occupies 13–92 (AKPGVYIMHD…IKEHRPKYNT (80 aa)). Residues 204-239 (KKIMDRLTTQMQEASEKMEYEEAARYRDLLMSVKQV) enclose the UVR domain.

Belongs to the UvrC family. As to quaternary structure, interacts with UvrB in an incision complex.

It is found in the cytoplasm. Its function is as follows. The UvrABC repair system catalyzes the recognition and processing of DNA lesions. UvrC both incises the 5' and 3' sides of the lesion. The N-terminal half is responsible for the 3' incision and the C-terminal half is responsible for the 5' incision. The protein is UvrABC system protein C of Lachnospira eligens (strain ATCC 27750 / DSM 3376 / VPI C15-48 / C15-B4) (Eubacterium eligens).